The following is a 255-amino-acid chain: MSNNYTSLSSSLDEEMGLKAGHEIDLEGSPPSEHNSEEKSTLPSNSDILTSANPVSQASETPDHSIESNTGSTQSPTSHSLLLKFSFCIVYYSYFAIVVLGCVLPFEHTHTFLIAFLVIFGIISVILFSGSIYYYETWTKTVKHFLKKVISPFKKEYIVCAFLKTFVFYGLLKTIEHFLVLLSGDKWGWKCSTLSSILTPVSCISFCLNESVQLRSCSTHLFINTVAWIKSLGGGKNAFENNYNQLNETSPEDLV.

The interval 19–78 is disordered; that stretch reads KAGHEIDLEGSPPSEHNSEEKSTLPSNSDILTSANPVSQASETPDHSIESNTGSTQSPTS. Composition is skewed to polar residues over residues 41 to 60 and 67 to 78; these read TLPSNSDILTSANPVSQASE and ESNTGSTQSPTS. The next 4 membrane-spanning stretches (helical) occupy residues 85 to 105, 112 to 132, 162 to 182, and 187 to 208; these read FSFCIVYYSYFAIVVLGCVLP, FLIAFLVIFGIISVILFSGSI, FLKTFVFYGLLKTIEHFLVLL, and WGWKCSTLSSILTPVSCISFCL.

This sequence belongs to the WTF family.

Its subcellular location is the spore membrane. Functionally, may act in meiotic drive. This is Wtf element wtf15 from Schizosaccharomyces pombe (strain 972 / ATCC 24843) (Fission yeast).